Reading from the N-terminus, the 385-residue chain is S-adenosylmethionine synthase (385 aa).

H16 provides a ligand contact to ATP. Position 18 (D18) interacts with Mg(2+). E44 contacts K(+). L-methionine is bound by residues E57 and Q100. The flexible loop stretch occupies residues 100-110; it reads QSPDINQGVDK. ATP contacts are provided by residues 165–167, 231–232, D240, 246–247, A263, and K267; these read DAK, RF, and RK. D240 contributes to the L-methionine binding site. K271 lines the L-methionine pocket.

This sequence belongs to the AdoMet synthase family. In terms of assembly, homotetramer; dimer of dimers. Requires Mg(2+) as cofactor. K(+) is required as a cofactor.

It localises to the cytoplasm. The catalysed reaction is L-methionine + ATP + H2O = S-adenosyl-L-methionine + phosphate + diphosphate. The protein operates within amino-acid biosynthesis; S-adenosyl-L-methionine biosynthesis; S-adenosyl-L-methionine from L-methionine: step 1/1. In terms of biological role, catalyzes the formation of S-adenosylmethionine (AdoMet) from methionine and ATP. The overall synthetic reaction is composed of two sequential steps, AdoMet formation and the subsequent tripolyphosphate hydrolysis which occurs prior to release of AdoMet from the enzyme. The chain is S-adenosylmethionine synthase from Vibrio cholerae serotype O1 (strain ATCC 39315 / El Tor Inaba N16961).